We begin with the raw amino-acid sequence, 282 residues long: MSDFSMETLKTLRQQTGVGLTKCKEALEACGGNLEEAVVYLRKLGLASAGKKEHRETKEGIIAAKTDANGTALIEVNVETDFVANNAVFREFVSNLLNDILKYKVDTVEALSQAASSQDPSLSVDELRAVTMQTVGENIRISRVAYFPKATNSTVGIYSHGNGKTVALTMLSGSSTADSLAKDIAMHVVAAQPQFLSKESVPAEAIAKEKEVIASQIQGKPQEVIEKIVTGKLNTFFQEACLLEQPFIKNADLSIQSLIDDFSKTSGSSVAIEQFILWKIGA.

The tract at residues Thr-80–Val-83 is involved in Mg(2+) ion dislocation from EF-Tu.

This sequence belongs to the EF-Ts family.

The protein localises to the cytoplasm. Functionally, associates with the EF-Tu.GDP complex and induces the exchange of GDP to GTP. It remains bound to the aminoacyl-tRNA.EF-Tu.GTP complex up to the GTP hydrolysis stage on the ribosome. The protein is Elongation factor Ts (tsf) of Chlamydia pneumoniae (Chlamydophila pneumoniae).